The following is a 255-amino-acid chain: F-box only protein 44 (255 aa).

The region spanning 3–50 (VGNINELPENILLELFTHVPARQLLLNCRLVCSLWRDLIDLVTLWKRK) is the F-box domain. The region spanning 71–252 (FYFLRSLHRN…VTNSSITIGP (182 aa)) is the FBA domain.

As to quaternary structure, part of a SCF (SKP1-cullin-F-box) protein ligase complex. Interacts with SKP1 and CUL1. As to expression, abundantly expressed in brain and kidney. Expressed at lower levels in heart, spleen and liver.

Functionally, substrate-recognition component of the SCF (SKP1-CUL1-F-box protein)-type E3 ubiquitin ligase complex. This is F-box only protein 44 (FBXO44) from Homo sapiens (Human).